A 208-amino-acid chain; its full sequence is Small ribosomal subunit protein uS4 (208 aa).

The S4 RNA-binding domain maps to Ser96–Leu159.

The protein belongs to the universal ribosomal protein uS4 family. Part of the 30S ribosomal subunit. Contacts protein S5. The interaction surface between S4 and S5 is involved in control of translational fidelity.

Its function is as follows. One of the primary rRNA binding proteins, it binds directly to 16S rRNA where it nucleates assembly of the body of the 30S subunit. With S5 and S12 plays an important role in translational accuracy. The protein is Small ribosomal subunit protein uS4 of Mycoplasma capricolum subsp. capricolum (strain California kid / ATCC 27343 / NCTC 10154).